Here is an 88-residue protein sequence, read N- to C-terminus: Small ribosomal subunit protein bS18A (88 aa).

Belongs to the bacterial ribosomal protein bS18 family. In terms of assembly, part of the 30S ribosomal subunit. Forms a tight heterodimer with protein bS6.

Its function is as follows. Binds as a heterodimer with protein bS6 to the central domain of the 16S rRNA, where it helps stabilize the platform of the 30S subunit. The polypeptide is Small ribosomal subunit protein bS18A (Roseiflexus sp. (strain RS-1)).